The following is a 306-amino-acid chain: Ribosomal protein L11 methyltransferase (306 aa).

S-adenosyl-L-methionine is bound by residues Thr152, Gly179, Asp201, and Asn243.

Belongs to the methyltransferase superfamily. PrmA family.

Its subcellular location is the cytoplasm. It catalyses the reaction L-lysyl-[protein] + 3 S-adenosyl-L-methionine = N(6),N(6),N(6)-trimethyl-L-lysyl-[protein] + 3 S-adenosyl-L-homocysteine + 3 H(+). Methylates ribosomal protein L11. The protein is Ribosomal protein L11 methyltransferase of Citrifermentans bemidjiense (strain ATCC BAA-1014 / DSM 16622 / JCM 12645 / Bem) (Geobacter bemidjiensis).